A 455-amino-acid polypeptide reads, in one-letter code: Serine--tRNA ligase (455 aa).

Residue 252–254 (TSE) coordinates L-serine. Residues 283–285 (RKE) and Val-299 contribute to the ATP site. L-serine is bound at residue Glu-306. Residue 370–373 (EVVS) coordinates ATP. Thr-406 is an L-serine binding site.

Belongs to the class-II aminoacyl-tRNA synthetase family. Type-1 seryl-tRNA synthetase subfamily. As to quaternary structure, homodimer. The tRNA molecule binds across the dimer.

It localises to the cytoplasm. It catalyses the reaction tRNA(Ser) + L-serine + ATP = L-seryl-tRNA(Ser) + AMP + diphosphate + H(+). The catalysed reaction is tRNA(Sec) + L-serine + ATP = L-seryl-tRNA(Sec) + AMP + diphosphate + H(+). It participates in aminoacyl-tRNA biosynthesis; selenocysteinyl-tRNA(Sec) biosynthesis; L-seryl-tRNA(Sec) from L-serine and tRNA(Sec): step 1/1. In terms of biological role, catalyzes the attachment of serine to tRNA(Ser). Is also able to aminoacylate tRNA(Sec) with serine, to form the misacylated tRNA L-seryl-tRNA(Sec), which will be further converted into selenocysteinyl-tRNA(Sec). The chain is Serine--tRNA ligase from Thermococcus sibiricus (strain DSM 12597 / MM 739).